Consider the following 387-residue polypeptide: DNA-damage-repair/toleration protein 111 (387 aa).

A disordered region spans residues 1–213 (MLGGLYGDLP…TSGLGVGAGG (213 aa)). The span at 19–29 (SGNSSSVWSSS) shows a compositional bias: low complexity. A compositionally biased stretch (basic and acidic residues) spans 103–158 (DPARPNDYEEYKREKKRKATEAEMKREMDKRRQEDEERDKREREEREKERERDNSD). Positions 214–260 (QMTAAQRMMAKMGWKQGQGLGKSEQGITTPLMAKKTDRRAGVIVNAS) constitute a G-patch domain. The region spanning 283-369 (RVLLLRNMVG…RTVRATFYDE (87 aa)) is the RRM domain.

As to quaternary structure, component of the SWAP1-SFPS-RRC1 splicing factor complex which modulates pre-mRNA splicing to promote photomorphogenesis. Interacts with SWAP1 in a light-independent manner. Associates with the photoreceptor phytochrome B (phyB) in nuclear photobodies upon response to red light. Binds to the splicing factor 1 SF1, involved in 3' splicing site recognition. In terms of tissue distribution, expressed ubiquitously with highest levels in dry seeds and in cells surrounding the base of trichomes and guard cells.

It localises to the nucleus. It is found in the nucleus speckle. As a member of the SWAP1-SFPS-RRC1 splicing factor complex, modulates photomorphogenesis by regulating the gene expression and pre-messenger RNA (mRNA) alternative splicing of a large number of genes, including those involved in plant responses to light signaling, probably by helping in the 3' splice site determination. Associates with and regulates EARLY FLOWERING 3 (ELF3) mRNA processing, a key component of the circadian clock also involved in photomorphogenesis. Required for light-regulated (red, far-red and blue lights) photomorphogenesis in a PHYB- and PHYTOCHROME INTERACTING FACTORS- (PIFs) dependent manner. Promotes flowering under both short (SD) and long days (LD). Controls abscisic acid (ABA) sensitivity during seed development, stomatal responsiveness and germination by monitoring ABI3 splicing, upstream of the splicing factor SUPPRESSOR OF ABI3-ABI5. Seems to be involved in the resistance to UV light and chemical DNA-damaging agents. In Arabidopsis thaliana (Mouse-ear cress), this protein is DNA-damage-repair/toleration protein 111.